A 364-amino-acid chain; its full sequence is MAASGPGCRSWCLCPEVPSATFFTALLSLLVSGPRLFLLQQPLAPSGLTLKSEALRNWQVYRLVTYIFVYENPISLLCGAIIIWRFAGNFERTVGTVRHCFFTVIFAIFSAIIFLSFEAVSSLSKLGEVEDARGFTPVAFAMLGVTTVRSRMRRALVFGMVVPSVLVPWLLLGASWLIPQTSFLSNVCGLSIGLAYGLTYCYSIDLSERVALKLDQTFPFSLMRRISVFKYVSGSSAERRAAQSRKLNPVPGSYPTQSCHPHLSPSHPVSQTQHASGQKLASWPSCTPGHMPTLPPYQPASGLCYVQNHFGPNPTSSSVYPASAGTSLGIQPPTPVNSPGTVYSGALGTPGAAGSKESSRVPMP.

Transmembrane regions (helical) follow at residues 11–31 (WCLC…SLLV), 63–83 (LVTY…AIII), 100–120 (CFFT…FEAV), 158–178 (FGMV…SWLI), and 184–204 (LSNV…CYSI). 2 disordered regions span residues 242 to 282 (AQSR…KLAS) and 317 to 364 (SSVY…VPMP). 2 stretches are compositionally biased toward polar residues: residues 267 to 276 (HPVSQTQHAS) and 317 to 329 (SSVY…TSLG).

It belongs to the peptidase S54 family.

The protein localises to the golgi apparatus. The protein resides in the cis-Golgi network membrane. The chain is Rhomboid domain-containing protein 2 (RHBDD2) from Homo sapiens (Human).